A 552-amino-acid polypeptide reads, in one-letter code: Dihydroxy-acid dehydratase (552 aa).

Residue Asp-78 coordinates Mg(2+). Cys-119 lines the [2Fe-2S] cluster pocket. Mg(2+) contacts are provided by Asp-120 and Lys-121. Residue Lys-121 is modified to N6-carboxylysine. [2Fe-2S] cluster is bound at residue Cys-191. Glu-442 is a binding site for Mg(2+). The Proton acceptor role is filled by Ser-468.

It belongs to the IlvD/Edd family. As to quaternary structure, homodimer. The cofactor is [2Fe-2S] cluster. Mg(2+) serves as cofactor.

It carries out the reaction (2R)-2,3-dihydroxy-3-methylbutanoate = 3-methyl-2-oxobutanoate + H2O. It catalyses the reaction (2R,3R)-2,3-dihydroxy-3-methylpentanoate = (S)-3-methyl-2-oxopentanoate + H2O. Its pathway is amino-acid biosynthesis; L-isoleucine biosynthesis; L-isoleucine from 2-oxobutanoate: step 3/4. It participates in amino-acid biosynthesis; L-valine biosynthesis; L-valine from pyruvate: step 3/4. In terms of biological role, functions in the biosynthesis of branched-chain amino acids. Catalyzes the dehydration of (2R,3R)-2,3-dihydroxy-3-methylpentanoate (2,3-dihydroxy-3-methylvalerate) into 2-oxo-3-methylpentanoate (2-oxo-3-methylvalerate) and of (2R)-2,3-dihydroxy-3-methylbutanoate (2,3-dihydroxyisovalerate) into 2-oxo-3-methylbutanoate (2-oxoisovalerate), the penultimate precursor to L-isoleucine and L-valine, respectively. This is Dihydroxy-acid dehydratase from Moorella thermoacetica (strain ATCC 39073 / JCM 9320).